The sequence spans 848 residues: Dynein axonemal intermediate chain 4 (848 aa).

2 disordered regions span residues 345–370 (SKAN…SETS) and 431–464 (EPEP…IHAE). The span at 359–370 (PGSTTEKNSETS) shows a compositional bias: polar residues. Residues 442 to 456 (ESAKHEEVEEESKKE) are compositionally biased toward basic and acidic residues. WD repeat units follow at residues 534-574 (QSPY…NVPV), 583-631 (KHLG…DCYD), 658-698 (SRQA…QYLD), 702-742 (GHKG…PSLS), 745-784 (PATS…LDPL), and 790-829 (NPGI…TVLE).

Part of the multisubunit axonemal dynein complex formed at least of two heavy chains and a number of intermediate and light chains. Associated with axonemal dynein subunits such as, DNAH2, DNAI3, and DYNLT1. Interacts with DYNLT1.

The protein localises to the cytoplasm. Its subcellular location is the cytoskeleton. The protein resides in the flagellum axoneme. It is found in the cilium axoneme. It localises to the dynein axonemal particle. Functionally, plays a critical role in the assembly of axonemal dynein complex, thereby playing a role in ciliary motility. This is Dynein axonemal intermediate chain 4 from Homo sapiens (Human).